We begin with the raw amino-acid sequence, 101 residues long: NADH-quinone oxidoreductase subunit K (101 aa).

3 consecutive transmembrane segments (helical) span residues 2–22 (TLSA…YGAL), 28–48 (VIVL…FVAF), and 62–82 (FALF…AALI).

The protein belongs to the complex I subunit 4L family. In terms of assembly, NDH-1 is composed of 14 different subunits. Subunits NuoA, H, J, K, L, M, N constitute the membrane sector of the complex.

The protein localises to the cell membrane. The enzyme catalyses a quinone + NADH + 5 H(+)(in) = a quinol + NAD(+) + 4 H(+)(out). NDH-1 shuttles electrons from NADH, via FMN and iron-sulfur (Fe-S) centers, to quinones in the respiratory chain. The immediate electron acceptor for the enzyme in this species is believed to be a menaquinone. Couples the redox reaction to proton translocation (for every two electrons transferred, four hydrogen ions are translocated across the cytoplasmic membrane), and thus conserves the redox energy in a proton gradient. This is NADH-quinone oxidoreductase subunit K from Geobacillus kaustophilus (strain HTA426).